A 321-amino-acid polypeptide reads, in one-letter code: ATP-dependent 6-phosphofructokinase (321 aa).

Gly-12 provides a ligand contact to ATP. ADP-binding positions include 22–26 (RGVVR) and 55–60 (RYSVSD). ATP-binding positions include 73-74 (RF) and 103-106 (GDGS). Asp-104 serves as a coordination point for Mg(2+). 127–129 (TID) lines the substrate pocket. Residue Asp-129 is the Proton acceptor of the active site. Arg-156 is an ADP binding site. Residues Arg-164 and 171–173 (MGR) each bind substrate. Residues 187–189 (GCE), Arg-213, and 215–217 (KRH) each bind ADP. Substrate is bound by residues Glu-224, Arg-245, and 251 to 254 (HIQR).

The protein belongs to the phosphofructokinase type A (PFKA) family. ATP-dependent PFK group I subfamily. Prokaryotic clade 'B1' sub-subfamily. In terms of assembly, homotetramer. The cofactor is Mg(2+).

Its subcellular location is the cytoplasm. It catalyses the reaction beta-D-fructose 6-phosphate + ATP = beta-D-fructose 1,6-bisphosphate + ADP + H(+). Its pathway is carbohydrate degradation; glycolysis; D-glyceraldehyde 3-phosphate and glycerone phosphate from D-glucose: step 3/4. With respect to regulation, allosterically activated by ADP and other diphosphonucleosides, and allosterically inhibited by phosphoenolpyruvate. Catalyzes the phosphorylation of D-fructose 6-phosphate to fructose 1,6-bisphosphate by ATP, the first committing step of glycolysis. This is ATP-dependent 6-phosphofructokinase from Haemophilus influenzae (strain PittEE).